A 485-amino-acid chain; its full sequence is Predicted GPI-anchored protein 27 (485 aa).

Residues 1–20 (MHFTSSLLATLIWFTLPVQS) form the signal peptide. N-linked (GlcNAc...) asparagine glycans are attached at residues Asn30, Asn86, Asn96, and Asn444. The GPI-anchor amidated glycine moiety is linked to residue Gly467. The propeptide at 468–485 (LVLVSSGVLLGTCLLFIL) is removed in mature form.

The protein resides in the cell membrane. This chain is Predicted GPI-anchored protein 27 (PGA27), found in Candida albicans (strain SC5314 / ATCC MYA-2876) (Yeast).